A 266-amino-acid polypeptide reads, in one-letter code: Type 1 encapsulin shell protein (266 aa).

The protein belongs to the encapsulin family. Family 1 subfamily. In terms of assembly, homomultimeric. This encapsulin nanocompartment is formed by 60 subunits, and encloses one Dyp homohexamer; partially assembled 58-subunit compartments with and without cargo are also purified. May assemble the shell from dimers. Monomers form pentamers, which assemble to form hollow shells with pores 5-8 Angstroms in diameter where 3 pentamers meet.

The protein resides in the encapsulin nanocompartment. Its function is as follows. Shell component of a type 1 encapsulin nanocompartment. Assembles into proteinaceous shells 23-24 nm in diameter with 2-2.5 nm thick walls. Endogenous cargo protein DyP (dye-decolorizing peroxidase) is targeted to the interior via its C-terminal extension; only 1 DyP hexamer is incorporated into each shell. Empty shells can be isolated in the absence of cargo. Cargo encapsulation probably precedes assembly of the nanocompartment; may assemble or disassemble via dimers, subcomplexes with a distinct preference for even numbers of subunits are detected. Nanocompartments are stable against mechanical forces; loaded nanocompartments are less stable than empty ones. Nanocompartments are stable between pH 5-10; they aggregate at pH 9-10 and start to disassemble at pH 11. They are stable in 1M NaCl, 1 M MgCl(2) and 1M CaCl(2), unstable in 20% DMSO (dimethylsulfoxide) and are stable in 20% but not 40% ethanol. The sequence is that of Type 1 encapsulin shell protein from Brevibacterium linens.